Consider the following 210-residue polypeptide: Oxygen-insensitive NADPH nitroreductase (210 aa).

Residue 150–155 (GVSLMG) coordinates NADP(+).

The protein belongs to the nitroreductase family.

Reduction of a variety of nitroaromatic compounds using NADPH as source of reducing equivalents; two electrons are transferred. The sequence is that of Oxygen-insensitive NADPH nitroreductase (rdxA) from Helicobacter pylori (strain J99 / ATCC 700824) (Campylobacter pylori J99).